Here is a 125-residue protein sequence, read N- to C-terminus: Methylglyoxal synthase (125 aa).

An MGS-like domain is found at 1 to 125 (MTQRLRIALI…TAEKLVRALD (125 aa)). Residues His-12, Lys-16, 38 to 41 (TGTT), and 59 to 60 (SG) contribute to the substrate site. The active-site Proton donor/acceptor is the Asp-65. His-92 serves as a coordination point for substrate.

Belongs to the methylglyoxal synthase family.

The enzyme catalyses dihydroxyacetone phosphate = methylglyoxal + phosphate. Its function is as follows. Catalyzes the formation of methylglyoxal from dihydroxyacetone phosphate. The polypeptide is Methylglyoxal synthase (Brucella abortus (strain S19)).